Reading from the N-terminus, the 502-residue chain is RxLR effector protein BLN06 (502 aa).

The signal sequence occupies residues methionine 1 to alanine 20. N-linked (GlcNAc...) asparagine glycosylation is present at asparagine 38. A dEER motif is present at residues leucine 50–arginine 53.

Belongs to the RxLR effector family.

It is found in the secreted. It localises to the host cell membrane. Functionally, secreted effector that triggers a robust hypersensitive response (HR) in Lactuca serriola LS102. The response to BLN06 was visible as chlorosis but not as strong necrosis. The sequence is that of RxLR effector protein BLN06 from Bremia lactucae (Lettuce downy mildew).